Here is a 492-residue protein sequence, read N- to C-terminus: Glycerol kinase 1 (492 aa).

Threonine 10 contacts ADP. ATP contacts are provided by threonine 10 and serine 11. Threonine 10 is a sn-glycerol 3-phosphate binding site. Lysine 14 is a binding site for ADP. Residues arginine 80, glutamate 81, tyrosine 132, and aspartate 241 each contribute to the sn-glycerol 3-phosphate site. Arginine 80, glutamate 81, tyrosine 132, and aspartate 241 together coordinate glycerol. ADP contacts are provided by threonine 263, glycine 306, glycine 407, and asparagine 411. ATP contacts are provided by threonine 263, glycine 306, and glycine 407.

This sequence belongs to the FGGY kinase family.

It catalyses the reaction glycerol + ATP = sn-glycerol 3-phosphate + ADP + H(+). Its pathway is polyol metabolism; glycerol degradation via glycerol kinase pathway; sn-glycerol 3-phosphate from glycerol: step 1/1. Its activity is regulated as follows. Inhibited by fructose 1,6-bisphosphate (FBP). Its function is as follows. Key enzyme in the regulation of glycerol uptake and metabolism. Catalyzes the phosphorylation of glycerol to yield sn-glycerol 3-phosphate. The protein is Glycerol kinase 1 of Thermotoga maritima (strain ATCC 43589 / DSM 3109 / JCM 10099 / NBRC 100826 / MSB8).